Reading from the N-terminus, the 481-residue chain is UDP-glycosyltransferase 71K2 (481 aa).

Residues Ser-285, 350-351 (WA), 368-376 (HCGWNSILE), and 390-393 (YAEQ) each bind UDP-alpha-D-glucose.

It belongs to the UDP-glycosyltransferase family.

Its function is as follows. Glycosyltransferase that possesses chalcone and flavonol 2'-O-glycosyltransferase activity. Converts phloretin to phlorizin (phloretin 2'-O-glucoside), a potent antioxidant. Possesses glycosyltransferase activity toward quercetin, isoliquiritigenin, butein and caffeic acid. This chain is UDP-glycosyltransferase 71K2, found in Pyrus communis (Pear).